A 1138-amino-acid chain; its full sequence is Phosphatidylserine decarboxylase proenzyme 2 (1138 aa).

Residues 1 to 122 (MRIIKGRKRG…SNSGLSSHSH (122 aa)) enclose the C2 1 domain. Disordered regions lie at residues 90 to 166 (TGAP…PGST), 269 to 305 (MRSS…DTDL), and 413 to 448 (AVSE…REDS). Positions 98–121 (SRPRTTTANTSSSTLSNSGLSSHS) are enriched in low complexity. Polar residues predominate over residues 125–135 (RNLNVTSKGNQ). The segment covering 136-166 (TSTSINSVSSSATPAPSHSSSSLSTTGPGST) has biased composition (low complexity). The segment covering 293 to 305 (EIRREKPYSDTDL) has biased composition (basic and acidic residues). Residues 421–448 (SVDDEESENQQESDEEFDIYNEDEREDS) show a composition bias toward acidic residues. A C2 2 domain is found at 478–600 (RRAKSNFFIS…QQQQHENEWI (123 aa)). Ca(2+)-binding residues include aspartate 571, serine 574, and aspartate 577. Catalysis depends on charge relay system; for autoendoproteolytic cleavage activity residues aspartate 899, histidine 956, and serine 1043. Residue serine 1043 is the Schiff-base intermediate with substrate; via pyruvic acid; for decarboxylase activity of the active site. A Pyruvic acid (Ser); by autocatalysis modification is found at serine 1043.

It belongs to the phosphatidylserine decarboxylase family. PSD-B subfamily. Eukaryotic type II sub-subfamily. In terms of assembly, heterodimer of a large membrane-associated beta subunit and a small pyruvoyl-containing alpha subunit. Interacts with pstB2/PDR17. This interaction may be a means to structurally tether the donor membrane (ER) harboring PstB2/PDR17 to acceptor membranes (Golgi/endosomes) harboring PSD2 during PtdSer transport to the site of PtdEtn synthesis. Requires pyruvate as cofactor. Ca(2+) is required as a cofactor. In terms of processing, is synthesized initially as an inactive proenzyme. Formation of the active enzyme involves a self-maturation process in which the active site pyruvoyl group is generated from an internal serine residue via an autocatalytic post-translational modification. Two non-identical subunits are generated from the proenzyme in this reaction, and the pyruvate is formed at the N-terminus of the alpha chain, which is derived from the carboxyl end of the proenzyme. The autoendoproteolytic cleavage occurs by a canonical serine protease mechanism, in which the side chain hydroxyl group of the serine supplies its oxygen atom to form the C-terminus of the beta chain, while the remainder of the serine residue undergoes an oxidative deamination to produce ammonia and the pyruvoyl prosthetic group on the alpha chain. During this reaction, the Ser that is part of the protease active site of the proenzyme becomes the pyruvoyl prosthetic group, which constitutes an essential element of the active site of the mature decarboxylase.

It is found in the golgi apparatus membrane. It localises to the endosome membrane. The catalysed reaction is a 1,2-diacyl-sn-glycero-3-phospho-L-serine + H(+) = a 1,2-diacyl-sn-glycero-3-phosphoethanolamine + CO2. Its pathway is phospholipid metabolism; phosphatidylethanolamine biosynthesis; phosphatidylethanolamine from CDP-diacylglycerol: step 2/2. Catalyzes the formation of phosphatidylethanolamine (PtdEtn) from phosphatidylserine (PtdSer). Plays a central role in phospholipid metabolism and in the interorganelle trafficking of phosphatidylserine. Phosphatidylethanolamine produced by PSD2 is insufficient to completely provide the PtdEtn pool required by mitochondria under respiratory conditions. PSD2 is also involved in the PtdSer transport step to the site of PtdEtn synthesis on the Golgi/endosome membranes. Required for normal heavy metal resistance. This Saccharomyces cerevisiae (strain ATCC 204508 / S288c) (Baker's yeast) protein is Phosphatidylserine decarboxylase proenzyme 2.